A 446-amino-acid chain; its full sequence is tRNA modification GTPase MnmE (446 aa).

(6S)-5-formyl-5,6,7,8-tetrahydrofolate-binding residues include Arg-28, Glu-85, and Lys-124. The TrmE-type G domain occupies 220–372; sequence GLTVVLVGQP…LRAKLLQAAG (153 aa). Asn-230 provides a ligand contact to K(+). GTP contacts are provided by residues 230–235, 249–255, and 274–277; these read NVGKSS, TEIAGTT, and DTAG. Residue Ser-234 participates in Mg(2+) binding. Residues Thr-249, Ile-251, and Thr-254 each contribute to the K(+) site. Residue Thr-255 coordinates Mg(2+). Position 446 (Lys-446) interacts with (6S)-5-formyl-5,6,7,8-tetrahydrofolate.

The protein belongs to the TRAFAC class TrmE-Era-EngA-EngB-Septin-like GTPase superfamily. TrmE GTPase family. As to quaternary structure, homodimer. Heterotetramer of two MnmE and two MnmG subunits. The cofactor is K(+).

The protein resides in the cytoplasm. In terms of biological role, exhibits a very high intrinsic GTPase hydrolysis rate. Involved in the addition of a carboxymethylaminomethyl (cmnm) group at the wobble position (U34) of certain tRNAs, forming tRNA-cmnm(5)s(2)U34. This chain is tRNA modification GTPase MnmE, found in Thiobacillus denitrificans (strain ATCC 25259 / T1).